The sequence spans 835 residues: Cap-specific mRNA (nucleoside-2'-O-)-methyltransferase 1 (835 aa).

The disordered stretch occupies residues 1–66; that stretch reads MKRRNDSECT…TEGKQRSSDS (66 aa). The Bipartite nuclear localization signal signature appears at 2 to 19; sequence KRRNDSECTAPLKKQKKR. Phosphoserine is present on residues serine 28, serine 31, serine 53, serine 66, and serine 91. A compositionally biased stretch (basic and acidic residues) spans 57–66; that stretch reads TEGKQRSSDS. Residues 87–133 form the G-patch domain; that stretch reads YNSVSQKLMAKMGFKEGEGLGKYSQGRKDIVEASNQKGRRGLGLTLQ. Lysine 108 bears the N6-acetyllysine mark. Substrate-binding positions include 203 to 207 and arginine 218; that span reads KSVFD. Residues 231-450 form the RrmJ-type SAM-dependent 2'-O-MTase domain; that stretch reads FFLNRAAMKM…ERYVVCKGLK (220 aa). Asparagine 234 serves as a coordination point for S-adenosyl-L-methionine. The active site involves lysine 239. Residues 277–283 and 335–336 each bind S-adenosyl-L-methionine; these read CAGPGGF and DI. Residue aspartate 364 is part of the active site. Residue 374 to 376 coordinates substrate; it reads NLQ. Lysine 404 (proton acceptor) is an active-site residue. Asparagine 439 is a substrate binding site. Residues 727 to 835 are interaction with POLR2A; the sequence is SSGTPKLSYT…VLSFIQTHSA (109 aa). The 35-residue stretch at 752-786 folds into the WW domain; the sequence is RTVNEPWTMGFSKSFKRKFFYNKKTKNSTFDLPAD.

Interacts with POLR2A (via C-terminus).

It localises to the nucleus. The enzyme catalyses a 5'-end (N(7)-methyl 5'-triphosphoguanosine)-ribonucleoside in mRNA + S-adenosyl-L-methionine = a 5'-end (N(7)-methyl 5'-triphosphoguanosine)-(2'-O-methyl-ribonucleoside) in mRNA + S-adenosyl-L-homocysteine + H(+). In terms of biological role, S-adenosyl-L-methionine-dependent methyltransferase that mediates mRNA cap1 2'-O-ribose methylation to the 5'-cap structure of mRNAs. Methylates the ribose of the first nucleotide of a m(7)GpppG-capped mRNA and small nuclear RNA (snRNA) to produce m(7)GpppRm (cap1). Displays a preference for cap0 transcripts. Cap1 modification is linked to higher levels of translation. May be involved in the interferon response pathway. This chain is Cap-specific mRNA (nucleoside-2'-O-)-methyltransferase 1 (CMTR1), found in Bos taurus (Bovine).